The sequence spans 449 residues: Elongation factor 1-alpha (449 aa).

In terms of domain architecture, tr-type G spans 5–230 (KVHINIVVIG…DQIQEPKRPS (226 aa)). The interval 14 to 21 (GHVDSGKS) is G1. 14-21 (GHVDSGKS) serves as a coordination point for GTP. Position 55 is an N6,N6-dimethyllysine (Lys-55). The interval 70–74 (GITID) is G2. An N6,N6,N6-trimethyllysine modification is found at Lys-79. Residues 91–94 (DAPG) form a G3 region. GTP is bound by residues 91 to 95 (DAPGH) and 153 to 156 (NKMD). Positions 153-156 (NKMD) are G4. The residue at position 187 (Lys-187) is an N6,N6,N6-trimethyllysine. Residues 194–196 (SGF) form a G5 region. The residue at position 261 (Lys-261) is an N6-methyllysine. At Glu-289 the chain carries 5-glutamyl glycerylphosphorylethanolamine. Lys-306 is modified (N6,N6,N6-trimethyllysine). Glu-362 carries the 5-glutamyl glycerylphosphorylethanolamine modification. Position 396 is an N6,N6,N6-trimethyllysine (Lys-396).

This sequence belongs to the TRAFAC class translation factor GTPase superfamily. Classic translation factor GTPase family. EF-Tu/EF-1A subfamily.

It is found in the cytoplasm. This protein promotes the GTP-dependent binding of aminoacyl-tRNA to the A-site of ribosomes during protein biosynthesis. The polypeptide is Elongation factor 1-alpha (EF1) (Manihot esculenta (Cassava)).